Here is a 467-residue protein sequence, read N- to C-terminus: Cysteine--tRNA ligase (467 aa).

Zn(2+) is bound at residue C28. A 'HIGH' region motif is present at residues 30 to 40; sequence MTVYDYCHLGH. 3 residues coordinate Zn(2+): C209, H234, and E238. The 'KMSKS' region signature appears at 266 to 270; that stretch reads KMSKS. K269 contacts ATP.

It belongs to the class-I aminoacyl-tRNA synthetase family. Monomer. Requires Zn(2+) as cofactor.

It is found in the cytoplasm. It catalyses the reaction tRNA(Cys) + L-cysteine + ATP = L-cysteinyl-tRNA(Cys) + AMP + diphosphate. The polypeptide is Cysteine--tRNA ligase (Hahella chejuensis (strain KCTC 2396)).